The following is a 390-amino-acid chain: Pyruvate dehydrogenase E1 component subunit alpha, somatic form, mitochondrial (390 aa).

Residues 1–29 constitute a mitochondrion transit peptide; sequence MRKMLAAVSRVLSGASQKPASRVLVASRN. Residue lysine 63 is modified to N6-acetyllysine; alternate. At lysine 63 the chain carries N6-succinyllysine; alternate. Pyruvate contacts are provided by histidine 92, tyrosine 118, arginine 119, alanine 157, glycine 165, valine 167, aspartate 196, glycine 197, alanine 198, asparagine 225, and tyrosine 227. Thiamine diphosphate is bound by residues tyrosine 118 and arginine 119. Residues glycine 165, valine 167, aspartate 196, glycine 197, alanine 198, and asparagine 225 each contribute to the thiamine diphosphate site. Position 196 (aspartate 196) interacts with Mg(2+). The Mg(2+) site is built by asparagine 225 and tyrosine 227. Serine 232 is modified (phosphoserine; by PDK1). The residue at position 244 (lysine 244) is an N6-acetyllysine; alternate. The residue at position 244 (lysine 244) is an N6-succinyllysine; alternate. Lysine 277 is modified (N6-succinyllysine). Histidine 292 is a binding site for thiamine diphosphate. Serine 293 carries the post-translational modification Phosphoserine; by PDK1, PDK2, PDK3 and PDK4. Position 295 is a phosphoserine (serine 295). Serine 300 is modified (phosphoserine; by PDK1, PDK2, PDK3 and PDK4). The residue at position 301 (tyrosine 301) is a Phosphotyrosine. N6-acetyllysine; alternate is present on lysine 313. Lysine 313 carries the post-translational modification N6-succinyllysine; alternate. Residues lysine 321 and lysine 336 each carry the N6-acetyllysine modification. Lysine 385 carries the post-translational modification N6-succinyllysine.

Heterotetramer of two PDHA1 and two PDHB subunits. The heterotetramer interacts with DLAT, and is part of the multimeric pyruvate dehydrogenase complex that contains multiple copies of pyruvate dehydrogenase (E1), dihydrolipoamide acetyltransferase (DLAT, E2) and lipoamide dehydrogenase (DLD, E3). These subunits are bound to an inner core composed of about 48 DLAT and 12 PDHX molecules. Thiamine diphosphate is required as a cofactor. Requires Mg(2+) as cofactor. Post-translationally, phosphorylation at Ser-232, Ser-293 and Ser-300 by PDK family kinases inactivates the enzyme; for this phosphorylation at a single site is sufficient. Phosphorylation at Ser-293 interferes with access to active site, and thereby inactivates the enzyme. Dephosphorylation at all three sites, i.e. at Ser-232, Ser-293 and Ser-300, is required for reactivation. Acetylation alters the phosphorylation pattern. Deacetylated by SIRT3.

The protein localises to the mitochondrion matrix. The enzyme catalyses N(6)-[(R)-lipoyl]-L-lysyl-[protein] + pyruvate + H(+) = N(6)-[(R)-S(8)-acetyldihydrolipoyl]-L-lysyl-[protein] + CO2. Its activity is regulated as follows. Pyruvate dehydrogenase activity is inhibited by phosphorylation of PDHA1; it is reactivated by dephosphorylation. The pyruvate dehydrogenase complex catalyzes the overall conversion of pyruvate to acetyl-CoA and CO(2), and thereby links the glycolytic pathway to the tricarboxylic cycle. This Pan troglodytes (Chimpanzee) protein is Pyruvate dehydrogenase E1 component subunit alpha, somatic form, mitochondrial (PDHA1).